A 57-amino-acid polypeptide reads, in one-letter code: Sec-independent protein translocase protein TatA (57 aa).

Residues 1–21 (MGISVWQLLIILLIVVMLFGT) form a helical membrane-spanning segment. The segment at 37–57 (GFRKSVSDGETTTQAEASSRS) is disordered. Polar residues predominate over residues 44 to 57 (DGETTTQAEASSRS).

It belongs to the TatA/E family. In terms of assembly, the Tat system comprises two distinct complexes: a TatABC complex, containing multiple copies of TatA, TatB and TatC subunits, and a separate TatA complex, containing only TatA subunits. Substrates initially bind to the TatABC complex, which probably triggers association of the separate TatA complex to form the active translocon.

It localises to the cell inner membrane. Functionally, part of the twin-arginine translocation (Tat) system that transports large folded proteins containing a characteristic twin-arginine motif in their signal peptide across membranes. TatA could form the protein-conducting channel of the Tat system. In Stutzerimonas stutzeri (Pseudomonas stutzeri), this protein is Sec-independent protein translocase protein TatA.